Reading from the N-terminus, the 166-residue chain is Sec-independent protein translocase protein TatB (166 aa).

Residues 2-22 (FDGIGFMELLLIGVLGLVVLG) form a helical membrane-spanning segment. The tract at residues 69–166 (SKGLSNLSPE…DTRSNPKANG (98 aa)) is disordered. Composition is skewed to polar residues over residues 88-97 (QAAQSVNRPY) and 112-132 (QIHS…SQAN). The span at 133 to 153 (PTATVEASPTSASPATPSEPS) shows a compositional bias: low complexity. Residues 155-166 (GADTRSNPKANG) show a composition bias toward polar residues.

The protein belongs to the TatB family. The Tat system comprises two distinct complexes: a TatABC complex, containing multiple copies of TatA, TatB and TatC subunits, and a separate TatA complex, containing only TatA subunits. Substrates initially bind to the TatABC complex, which probably triggers association of the separate TatA complex to form the active translocon.

The protein resides in the cell inner membrane. In terms of biological role, part of the twin-arginine translocation (Tat) system that transports large folded proteins containing a characteristic twin-arginine motif in their signal peptide across membranes. Together with TatC, TatB is part of a receptor directly interacting with Tat signal peptides. TatB may form an oligomeric binding site that transiently accommodates folded Tat precursor proteins before their translocation. The chain is Sec-independent protein translocase protein TatB from Shewanella baltica (strain OS223).